Consider the following 736-residue polypeptide: Probable methionine--tRNA ligase, cytoplasmic (736 aa).

The short motif at 25-35 (PYVNNVPHLGN) is the 'HIGH' region element. Positions 346-350 (KFSKS) match the 'KMSKS' region motif. Lys349 contacts ATP. The tRNA-binding domain maps to 573–680 (PEFPIDMKIA…QSIEAGSKIA (108 aa)).

This sequence belongs to the class-I aminoacyl-tRNA synthetase family.

It is found in the cytoplasm. It carries out the reaction tRNA(Met) + L-methionine + ATP = L-methionyl-tRNA(Met) + AMP + diphosphate. This chain is Probable methionine--tRNA ligase, cytoplasmic (metS), found in Dictyostelium discoideum (Social amoeba).